A 736-amino-acid chain; its full sequence is Polyribonucleotide nucleotidyltransferase (736 aa).

2 residues coordinate Mg(2+): Asp-506 and Asp-512. The KH domain occupies 573-632; sequence PRLTTIQVPVDAIGLIIGKGGETIRSITEETGAEINIEDDGTVTIACSSVEGTHAALATI. Residues 642–717 enclose the S1 motif domain; sequence GTIYLGKVRD…GKTRFALSMR (76 aa).

It belongs to the polyribonucleotide nucleotidyltransferase family. It depends on Mg(2+) as a cofactor.

The protein resides in the cytoplasm. It carries out the reaction RNA(n+1) + phosphate = RNA(n) + a ribonucleoside 5'-diphosphate. Functionally, involved in mRNA degradation. Catalyzes the phosphorolysis of single-stranded polyribonucleotides processively in the 3'- to 5'-direction. The protein is Polyribonucleotide nucleotidyltransferase of Chlorobium limicola (strain DSM 245 / NBRC 103803 / 6330).